The sequence spans 163 residues: Bacterial microcompartment assembly protein PduM (163 aa).

It belongs to the PduM family. In terms of assembly, interacts with shell protein PduK.

It is found in the bacterial microcompartment. It participates in polyol metabolism; 1,2-propanediol degradation. Its function is as follows. Plays an essential role in assembly and/or stability of the bacterial microcompartment (BMC) dedicated to 1,2-propanediol (1,2-PD) degradation. Expression of a cosmid containing the full 21-gene pdu operon in E.coli allows E.coli to grow on 1,2-propanediol (1,2-PD) with the appearance of bacterial microcompartments (BMC) in its cytoplasm. In terms of biological role, the 1,2-PD-specific bacterial microcompartment (BMC) concentrates low levels of 1,2-PD catabolic enzymes, concentrates volatile reaction intermediates thus enhancing pathway flux and keeps the level of toxic, mutagenic propionaldehyde low. This Citrobacter freundii protein is Bacterial microcompartment assembly protein PduM.